Here is a 1249-residue protein sequence, read N- to C-terminus: DNA-directed RNA polymerase subunit beta (1249 aa).

Belongs to the RNA polymerase beta chain family. In terms of assembly, the RNAP catalytic core consists of 2 alpha, 1 beta, 1 beta' and 1 omega subunit. When a sigma factor is associated with the core the holoenzyme is formed, which can initiate transcription.

It carries out the reaction RNA(n) + a ribonucleoside 5'-triphosphate = RNA(n+1) + diphosphate. DNA-dependent RNA polymerase catalyzes the transcription of DNA into RNA using the four ribonucleoside triphosphates as substrates. This Clostridium botulinum (strain Eklund 17B / Type B) protein is DNA-directed RNA polymerase subunit beta.